Reading from the N-terminus, the 365-residue chain is Histidine biosynthesis bifunctional protein HisB (365 aa).

A histidinol-phosphatase region spans residues 1–176 (MTQQPTLFID…VADPKGLGQP (176 aa)). The active-site Nucleophile is D10. Residues D10 and D12 each contribute to the Mg(2+) site. D12 serves as the catalytic Proton donor. Residues C93, H95, C101, and C103 each coordinate Zn(2+). Residue D130 participates in Mg(2+) binding. An imidazoleglycerol-phosphate dehydratase region spans residues 177–365 (RHAVVARKTK…NEMPSSKGVL (189 aa)).

It in the N-terminal section; belongs to the histidinol-phosphatase family. The protein in the C-terminal section; belongs to the imidazoleglycerol-phosphate dehydratase family. The cofactor is Mg(2+). Zn(2+) is required as a cofactor.

It localises to the cytoplasm. It catalyses the reaction D-erythro-1-(imidazol-4-yl)glycerol 3-phosphate = 3-(imidazol-4-yl)-2-oxopropyl phosphate + H2O. It carries out the reaction L-histidinol phosphate + H2O = L-histidinol + phosphate. The protein operates within amino-acid biosynthesis; L-histidine biosynthesis; L-histidine from 5-phospho-alpha-D-ribose 1-diphosphate: step 6/9. Its pathway is amino-acid biosynthesis; L-histidine biosynthesis; L-histidine from 5-phospho-alpha-D-ribose 1-diphosphate: step 8/9. The protein is Histidine biosynthesis bifunctional protein HisB of Mannheimia succiniciproducens (strain KCTC 0769BP / MBEL55E).